The sequence spans 194 residues: Flavin prenyltransferase UbiX (194 aa).

Residues 9–11 (GAS), Ser35, 86–89 (SIKT), and Arg121 contribute to the FMN site. The dimethylallyl phosphate site is built by Tyr151 and Lys167.

It belongs to the UbiX/PAD1 family.

It catalyses the reaction dimethylallyl phosphate + FMNH2 = prenylated FMNH2 + phosphate. Involved in the carboxylation of phenylphosphate. Its function is as follows. Flavin prenyltransferase that catalyzes the synthesis of the prenylated FMN cofactor (prenyl-FMN) for 4-hydroxy-3-polyprenylbenzoic acid decarboxylase UbiD. The prenyltransferase is metal-independent and links a dimethylallyl moiety from dimethylallyl monophosphate (DMAP) to the flavin N5 and C6 atoms of FMN. The sequence is that of Flavin prenyltransferase UbiX from Thauera aromatica.